A 378-amino-acid chain; its full sequence is Spermidine/putrescine import ATP-binding protein PotA (378 aa).

The 231-residue stretch at Val18–Ile248 folds into the ABC transporter domain. Gly50–Thr57 lines the ATP pocket.

This sequence belongs to the ABC transporter superfamily. Spermidine/putrescine importer (TC 3.A.1.11.1) family. In terms of assembly, the complex is composed of two ATP-binding proteins (PotA), two transmembrane proteins (PotB and PotC) and a solute-binding protein (PotD).

It localises to the cell inner membrane. The enzyme catalyses ATP + H2O + polyamine-[polyamine-binding protein]Side 1 = ADP + phosphate + polyamineSide 2 + [polyamine-binding protein]Side 1.. Functionally, part of the ABC transporter complex PotABCD involved in spermidine/putrescine import. Responsible for energy coupling to the transport system. This chain is Spermidine/putrescine import ATP-binding protein PotA, found in Salmonella typhi.